The sequence spans 1763 residues: Genome polyprotein (1763 aa).

The SF3 helicase domain maps to 458–614 (DGVITSCNKR…ESHKRARPGT (157 aa)). Residue 484 to 491 (GPPGCGKT) coordinates ATP. At Tyr984 the chain carries O-(5'-phospho-RNA)-tyrosine. At Thr1040 the chain carries Phosphothreonine. Position 1067 is a phosphoserine (Ser1067). In terms of domain architecture, Peptidase C24 spans 1073-1229 (GPGTKFHKNA…KLVVPYIHID (157 aa)). Catalysis depends on for 3CLpro activity residues His1110, Glu1131, and Cys1193. The 126-residue stretch at 1478 to 1603 (AKVFAVDYSK…MFPTMFASVS (126 aa)) folds into the RdRp catalytic domain.

Homodimer. Interacts with NTPase, protein p30 and protease-polymerase p76. In terms of assembly, interacts with capsid protein VP1 and protease-polymerase p76. Interacts with host IEF4e; this interaction plays a role in translation of viral proteins. As to quaternary structure, homooligomer. Interacts with Vpg, protein p32 and may interact with capsid protein VP1. Post-translationally, specific enzymatic cleavages in vivo yield mature proteins. Pro-Pol is first autocatalytically cleaved, then processes the whole polyprotein. VPg is uridylylated by the polymerase and is covalently attached to the 5'-end of the polyadenylated genomic and subgenomic RNAs. This uridylylated form acts as a nucleotide-peptide primer for the polymerase.

The protein localises to the host endoplasmic reticulum membrane. The enzyme catalyses a ribonucleoside 5'-triphosphate + H2O = a ribonucleoside 5'-diphosphate + phosphate + H(+). It carries out the reaction RNA(n) + a ribonucleoside 5'-triphosphate = RNA(n+1) + diphosphate. The catalysed reaction is Endopeptidase with a preference for cleavage when the P1 position is occupied by Glu-|-Xaa and the P1' position is occupied by Gly-|-Yaa.. Its function is as follows. Together with NTPase and NS4, initiates the formation of the replication complex. Induces the proliferation of the host smooth ER membranes forming long tubular structures. These remodeled membranes probably form the viral factories that contain the replication complex. Displays NTPase activity, but no helicase activity. Induces the formation of convoluted membranes derived from the host ER. These remodeled membranes probably form the viral factories that contain the replication complex. Together with NS2 and NS4, initiates the formation of the replication complex. In terms of biological role, probable key protein responsible for the formation of membrane alterations by the virus. Induces the formation of convoluted membranes derived from the host ER. These remodeled membranes probably form the viral factories that contain the replication complex. Together with NS2 and NTPase, initiates the formation of the replication complex. Functionally, viral genome-linked protein is covalently linked to the 5'-end of the positive-strand, negative-strand genomic RNAs and subgenomic RNA. Acts as a genome-linked replication primer. May recruit ribosome to viral RNA thereby promoting viral proteins translation. Interacts with host translation initiation complex to allow the translation of viral proteins. Its function is as follows. Protease-polymerase p76 processes the polyprotein: Pro-Pol is first released by autocleavage, then all other proteins are cleaved. Cleaves host translation initiation factor eIF4G1, eIF4G2 and PABP1 thereby inducing a shutdown of host protein synthesis. This shutdown may not prevent viral mRNA from being translated since viral Vpg replaces the cap. Also functions as an RNA-directed RNA polymerase, which replicates genomic and antigenomic viral RNA by recognizing specific signals. Also transcribes a subgenomic mRNA by initiating RNA synthesis internally on antigenomic RNA. This sgRNA codes for structural proteins. Catalyzes the covalent attachment VPg with viral RNAs. Cleaves host G3BP1 thereby preventing the assembly of host stress granules. The protein is Genome polyprotein of Feline calicivirus (strain Japanese F4) (FCV).